The following is a 379-amino-acid chain: Nitric oxide reductase FlRd-NAD(+) reductase (379 aa).

It belongs to the FAD-dependent oxidoreductase family. FAD serves as cofactor.

Its subcellular location is the cytoplasm. The catalysed reaction is 2 reduced [nitric oxide reductase rubredoxin domain] + NAD(+) + H(+) = 2 oxidized [nitric oxide reductase rubredoxin domain] + NADH. Its pathway is nitrogen metabolism; nitric oxide reduction. One of at least two accessory proteins for anaerobic nitric oxide (NO) reductase. Reduces the rubredoxin moiety of NO reductase. The protein is Nitric oxide reductase FlRd-NAD(+) reductase of Pectobacterium atrosepticum (strain SCRI 1043 / ATCC BAA-672) (Erwinia carotovora subsp. atroseptica).